A 53-amino-acid chain; its full sequence is Conotoxin-like peptide 1 (53 aa).

A signal peptide spans 1-18; the sequence is MGVKSALFIMAVFAAANV. Disulfide bonds link cysteine 25–cysteine 39, cysteine 32–cysteine 43, and cysteine 38–cysteine 50.

Its subcellular location is the secreted. The polypeptide is Conotoxin-like peptide 1 (CTL-1) (Orgyia pseudotsugata multicapsid polyhedrosis virus (OpMNPV)).